The sequence spans 446 residues: StAR-related lipid transfer protein 3 (446 aa).

Residues 1–52 (MSKRPGDLACDLERSLPALASLGTSLSHSQSLSSHFIPPPLEKRRAISDVRR) lie on the Cytoplasmic side of the membrane. The 172-residue stretch at 47–218 (ISDVRRTFCL…YSPPESFAGS (172 aa)) folds into the MENTAL domain. A helical transmembrane segment spans residues 53 to 73 (TFCLFVTFDLLFISLLWIIEL). At 74–95 (NTNTGIRKNLEQEVIHYSFQSS) the chain is on the extracellular side. Residues 96–116 (FFDIFVLAFFRFSGLLLGYAV) traverse the membrane as a helical segment. Topologically, residues 117-121 (LRLQH) are cytoplasmic. A helical membrane pass occupies residues 122–142 (WWVIAVTTLVSSAFLIVKVIL). Residues 143–149 (SELLSKG) lie on the Extracellular side of the membrane. Residues 150 to 170 (AFGYLLPIVSFVLAWLETWFL) form a helical membrane-spanning segment. The Cytoplasmic segment spans residues 171 to 446 (DFKVLPQEAE…QRVGELGARA (276 aa)). The FFAT motif lies at 207-213 (QFYSPPE). A phosphoserine mark is found at Ser-210, Ser-218, and Ser-222. One can recognise an START domain in the interval 231-444 (SFSAQEREYI…LRQRVGELGA (214 aa)).

The protein belongs to the STARD3 family. As to quaternary structure, homodimer. Interacts (via the MENTAL domain) with STARD3NL. Interacts (via phosphorylated FFAT motif) with VAPA (via MSP domain). Interacts (via phosphorylated FFAT motif) with VAPB (via MSP domain). Interacts (via phosphorylated FFAT motif) with MOSPD2 (via MSP domain); this interaction allows enrichment of MOSPD2 around endosomes. Post-translationally, phosphorylation at Ser-210 is necessary and sufficient for the direct interaction of the phosphorylated FFAT motif with the MSP domain of MOSPD2, VAPA and VAPB and allows the tethering of two membranes that participates in the formation of ER-endosome contacts. Phosphorylation of the FFAT motif leads to conformation changes. Additional phosphorylations around the core FFAT motif (QFYSPPE) are not essential but strengthen the interaction with MOSPD2, VAPA and VAPB. Phosphorylation at Ser-210 of FFAT motif drives membrane tethering between the endoplasmic reticulum and late endosomes via interaction with VAPA and VAPB that in turn allows the efficient transport of sterol mediated by the START domain.

The protein localises to the late endosome membrane. The enzyme catalyses cholesterol(in) = cholesterol(out). Its function is as follows. Sterol-binding protein that mediates cholesterol transport from the endoplasmic reticulum to endosomes. The sterol transport mechanism is triggered by phosphorylation of FFAT motif that leads to membrane tethering between the endoplasmic reticulum and late endosomes via interaction with VAPA and VAPB. Acts as a lipid transfer protein that redirects sterol to the endosome at the expense of the cell membrane and favors membrane formation inside endosomes. May also mediate cholesterol transport between other membranes, such as mitochondria membrane or cell membrane. However, such results need additional experimental evidences; probably mainly mediates cholesterol transport from the endoplasmic reticulum to endosomes. Does not activate transcriptional cholesterol sensing. Able to bind other lipids, such as lutein, a xanthophyll carotenoids that form the macular pigment of the retina. In Mus musculus (Mouse), this protein is StAR-related lipid transfer protein 3.